A 315-amino-acid chain; its full sequence is Acetyl-coenzyme A carboxylase carboxyl transferase subunit beta, chloroplastic (315 aa).

The 269-residue stretch at 47-315 (LWTRCDSCEN…VYKESNSYLF (269 aa)) folds into the CoA carboxyltransferase N-terminal domain. 4 residues coordinate Zn(2+): Cys-51, Cys-54, Cys-70, and Cys-73. The C4-type zinc-finger motif lies at 51 to 73 (CDSCENMLYVRFLKQNKRICEEC).

This sequence belongs to the AccD/PCCB family. As to quaternary structure, acetyl-CoA carboxylase is a heterohexamer composed of biotin carboxyl carrier protein, biotin carboxylase and 2 subunits each of ACCase subunit alpha and ACCase plastid-coded subunit beta (accD). Zn(2+) is required as a cofactor.

The protein resides in the plastid. The protein localises to the chloroplast stroma. The catalysed reaction is N(6)-carboxybiotinyl-L-lysyl-[protein] + acetyl-CoA = N(6)-biotinyl-L-lysyl-[protein] + malonyl-CoA. The protein operates within lipid metabolism; malonyl-CoA biosynthesis; malonyl-CoA from acetyl-CoA: step 1/1. In terms of biological role, component of the acetyl coenzyme A carboxylase (ACC) complex. Biotin carboxylase (BC) catalyzes the carboxylation of biotin on its carrier protein (BCCP) and then the CO(2) group is transferred by the transcarboxylase to acetyl-CoA to form malonyl-CoA. In Physcomitrium patens (Spreading-leaved earth moss), this protein is Acetyl-coenzyme A carboxylase carboxyl transferase subunit beta, chloroplastic.